The sequence spans 148 residues: Ribonuclease H (148 aa).

Residues 1 to 143 (MNQVVIYTDG…ADMLANKGVE (143 aa)) enclose the RNase H type-1 domain. Residues D9, E47, D69, and D135 each coordinate Mg(2+).

This sequence belongs to the RNase H family. In terms of assembly, monomer. Mg(2+) serves as cofactor.

It is found in the cytoplasm. The enzyme catalyses Endonucleolytic cleavage to 5'-phosphomonoester.. In terms of biological role, endonuclease that specifically degrades the RNA of RNA-DNA hybrids. The sequence is that of Ribonuclease H from Acidovorax sp. (strain JS42).